A 340-amino-acid polypeptide reads, in one-letter code: Uroporphyrinogen decarboxylase (340 aa).

Substrate contacts are provided by residues 23 to 27 (RQAGR), Asp-72, Tyr-147, Thr-202, and His-316.

The protein belongs to the uroporphyrinogen decarboxylase family. Homodimer.

The protein localises to the cytoplasm. It catalyses the reaction uroporphyrinogen III + 4 H(+) = coproporphyrinogen III + 4 CO2. The protein operates within porphyrin-containing compound metabolism; protoporphyrin-IX biosynthesis; coproporphyrinogen-III from 5-aminolevulinate: step 4/4. Its function is as follows. Catalyzes the decarboxylation of four acetate groups of uroporphyrinogen-III to yield coproporphyrinogen-III. In Trichlorobacter lovleyi (strain ATCC BAA-1151 / DSM 17278 / SZ) (Geobacter lovleyi), this protein is Uroporphyrinogen decarboxylase.